A 1378-amino-acid chain; its full sequence is Hybrid signal transduction histidine kinase H (1378 aa).

A coiled-coil region spans residues 212 to 242 (KEKFKKEELINDFKSRLETLENKIDQRVDER). Residues 243 to 314 (IETRFKYVLE…NNNNNNNNNN (72 aa)) form the PAS domain. The disordered stretch occupies residues 294–337 (YQQHNNNNNNNNNNNNNNNNNNNNNSNNKSPIINSPNTTSPTNT). The segment covering 298 to 337 (NNNNNNNNNNNNNNNNNNNNNSNNKSPIINSPNTTSPTNT) has biased composition (low complexity). Residues 498 to 805 (TMSHEMRTPL…SFHFLVEVFF (308 aa)) enclose the Histidine kinase domain. H501 bears the Phosphohistidine; by autocatalysis mark. Residues 663–696 (NNSNNSNNNHNHNNNNNNNNHLNCSGSFNNNGFN) are compositionally biased toward low complexity. 3 disordered regions span residues 663–717 (NNSN…DKHC), 905–924 (TNNN…STTT), and 1103–1213 (NNSN…HPNP). Residues 697–714 (HGHHHHHHHHHHHHHHHD) show a composition bias toward basic residues. 2 stretches are compositionally biased toward low complexity: residues 1103–1119 (NNSN…SGSS) and 1136–1187 (SPSL…NNNN). The segment covering 1188 to 1206 (LNHYNSDSILSSDLSPQQH) has biased composition (polar residues). Residues 1244–1364 (KIMVAEDSLV…ILAVELKRAW (121 aa)) form the Response regulatory domain. Residue D1297 is modified to 4-aspartylphosphate.

Post-translationally, activation probably requires transfer of a phosphate group between a histidine in the kinase core (transmitter) domain and an aspartate of the receiver domain.

The catalysed reaction is ATP + protein L-histidine = ADP + protein N-phospho-L-histidine.. In terms of biological role, acts as a receptor histidine kinase for a signal transduction pathway. This protein undergoes an ATP-dependent autophosphorylation at a conserved histidine residue in the kinase core, and a phosphoryl group is then transferred to a conserved aspartate residue in the receiver domain. The chain is Hybrid signal transduction histidine kinase H (dhkH) from Dictyostelium discoideum (Social amoeba).